Here is a 392-residue protein sequence, read N- to C-terminus: Metacaspase-1 (392 aa).

A compositionally biased stretch (polar residues) spans 1-14 (MYPGSGNYSYNNRP). Positions 1 to 87 (MYPGSGNYSY…PSSIQQGNGQ (87 aa)) are disordered. Residues 41–51 (QQQQYQDQYQG) show a composition bias toward low complexity. The span at 53–63 (NRGQYQGQYQD) shows a compositional bias: polar residues. Catalysis depends on residues H182 and C238.

The protein belongs to the peptidase C14B family.

Functionally, involved in cell death (apoptosis). The polypeptide is Metacaspase-1 (MCA1) (Candida glabrata (strain ATCC 2001 / BCRC 20586 / JCM 3761 / NBRC 0622 / NRRL Y-65 / CBS 138) (Yeast)).